Consider the following 166-residue polypeptide: Small ribosomal subunit protein cS23z (166 aa).

It belongs to the chloroplast-specific ribosomal protein cS23 family. Part of the 30S ribosomal subunit.

The protein localises to the plastid. The protein resides in the chloroplast. Its function is as follows. Component of the chloroplast ribosome (chloro-ribosome), a dedicated translation machinery responsible for the synthesis of chloroplast genome-encoded proteins, including proteins of the transcription and translation machinery and components of the photosynthetic apparatus. This chain is Small ribosomal subunit protein cS23z, found in Arabidopsis thaliana (Mouse-ear cress).